We begin with the raw amino-acid sequence, 1110 residues long: cGMP-specific 3',5'-cyclic phosphodiesterase (1110 aa).

Low complexity-rich tracts occupy residues 1 to 25 (MTDVSAAAGGATAPAETAATSSSAS) and 35 to 55 (TSTAMAAPTATPTTAATASGA). 3 disordered regions span residues 1-55 (MTDV…ASGA), 67-128 (ISNQ…QQDV), and 184-203 (ASPTVQQKSPRSLSNSSASS). Pro residues predominate over residues 88–103 (APYPPVPAAKPKPTPT). The span at 192 to 203 (SPRSLSNSSASS) shows a compositional bias: low complexity. GAF domains are found at residues 233 to 385 (DIDV…GIGI) and 417 to 601 (NLEC…GLGI). The 324-residue stretch at 631–954 (SQDQTEKLTQ…RNWQDLAEKV (324 aa)) folds into the PDEase domain. His707 serves as the catalytic Proton donor. His711, His747, Asp748, and Asp858 together coordinate a divalent metal cation. Disordered regions lie at residues 997–1028 (AQHGAGAGGDDSHTPEHQRSGSRLSMKKTGAL) and 1040–1110 (LYNS…CSLL). Basic and acidic residues-rich tracts occupy residues 1006–1015 (DDSHTPEHQR) and 1056–1068 (LESHVSEDMDDKS). Low complexity predominate over residues 1082 to 1097 (GRMSASSSTSSAGTVV). Basic residues predominate over residues 1100–1110 (SKKRSKLCSLL). A Cysteine methyl ester modification is found at Cys1107. Cys1107 carries the S-farnesyl cysteine lipid modification. A propeptide spans 1108-1110 (SLL) (removed in mature form).

This sequence belongs to the cyclic nucleotide phosphodiesterase family. Interacts with PrBP. It depends on a divalent metal cation as a cofactor.

It is found in the cell membrane. The catalysed reaction is 3',5'-cyclic GMP + H2O = GMP + H(+). Functionally, has a role regulating cGMP transport in Malpighian tubule principal cells. This Drosophila pseudoobscura pseudoobscura (Fruit fly) protein is cGMP-specific 3',5'-cyclic phosphodiesterase.